Reading from the N-terminus, the 434-residue chain is Quinolone resistance transporter (434 aa).

The next 12 helical transmembrane spans lie at 15-35 (LIPALVILYLVAYIDRAAVGF), 45-65 (GIGDAAYGLGAGLFFIGYFLF), 85-105 (ILLTWGLITMAMALIQGPKSF), 110-130 (FLLGVAEAGFFPGVLYLITQW), 142-162 (MFVLSQPIAMMIAGPLAGLLL), 175-195 (WLFVAVGLPAVLLALPTFLWL), 241-261 (VLLLALYYLPVTLSIYGLNLW), 275-295 (IQIGFLSSIPYIFGIIGLLII), 306-326 (YGHLSFLYALGACAMFLSGWL), 333-353 (LAALAVVAFCLFSSTAVFWTL), 367-387 (IALINSVGNLGGYVGPFGIGL), and 396-416 (AAGLYFLSIVMLFGLILTYIV).

It belongs to the major facilitator superfamily.

The protein localises to the cell inner membrane. Efflux pump that mediates resistance to quinolone-type antibiotics. The polypeptide is Quinolone resistance transporter (Acinetobacter baumannii).